Reading from the N-terminus, the 93-residue chain is uncharacterized protein (93 aa).

The Sm domain maps to 1-76 (MDSHTTEKRR…IQTIEPDESM (76 aa)).

Part of the core SMN complex at least composed of smn1, yip11/gem2, gem6, gem7 and gem8. Interacts with gem7; the interaction is direct.

In terms of biological role, the SMN complex catalyzes the assembly of small nuclear ribonucleoproteins (snRNPs), the building blocks of the spliceosome, and thereby plays an important role in the splicing of cellular pre-mRNAs. Most spliceosomal snRNPs contain a common set of Sm proteins smb1, smd1, smd2, smd3, sme1, smf1 and smg1 that assemble in a heptameric protein ring on the Sm site of the small nuclear RNA to form the core snRNP (Sm core). In the cytosol, the Sm proteins smd1, smd2, sme1, smf1 and smg1 (5Sm) are trapped in an inactive 6S pICln-Sm complex by the chaperone saf5. To complete assembly of core snRNPs, the SMN complex accepts 5Sm from saf5. Binding of snRNA inside 5Sm triggers eviction of the SMN complex, thereby allowing binding of smd3 and smb1 to complete assembly of the core snRNP. This is an uncharacterized protein from Schizosaccharomyces pombe (strain 972 / ATCC 24843) (Fission yeast).